The sequence spans 170 residues: Large ribosomal subunit protein uL22c (170 aa).

The protein belongs to the universal ribosomal protein uL22 family. As to quaternary structure, part of the 50S ribosomal subunit.

It localises to the plastid. The protein resides in the chloroplast. This protein binds specifically to 23S rRNA. Functionally, the globular domain of the protein is located near the polypeptide exit tunnel on the outside of the subunit, while an extended beta-hairpin is found that lines the wall of the exit tunnel in the center of the 70S ribosome. This is Large ribosomal subunit protein uL22c (rpl22) from Nandina domestica (Heavenly bamboo).